Here is a 99-residue protein sequence, read N- to C-terminus: Large ribosomal subunit protein uL23 (99 aa).

The protein belongs to the universal ribosomal protein uL23 family. As to quaternary structure, part of the 50S ribosomal subunit. Contacts protein L29, and trigger factor when it is bound to the ribosome.

Its function is as follows. One of the early assembly proteins it binds 23S rRNA. One of the proteins that surrounds the polypeptide exit tunnel on the outside of the ribosome. Forms the main docking site for trigger factor binding to the ribosome. The polypeptide is Large ribosomal subunit protein uL23 (Blochmanniella floridana).